Consider the following 387-residue polypeptide: MSVIKMTDLDLAGKRVLIRADLNVPVKEGKVTSDARIRASLPTIEIALKQGARVMVTSHLGRPTEGEYNEEFSLLPVVDYLKEKLSSPVRLAKDYLDGVDVAEGELVVLENVRFNKGEKKDDEVLSKKYAALCDVFVMDAFGTAHRAQASTHGVGKFAPIACAGPLLSGELEALGKALSEPARPMVAIVGGSKVSTKLTVLDSLSKIADQLIVGGGIANTFVAAQGHNVGKSLYEADLIPEAKKLLETCDIPVPSDVRVASEFSETATATLKSVTAIKDEEQILDLGDVSAERLAEILKNAKTILWNGPVGVFEFPNFRKGTETIARAIAESDAFSIAGGGDTLAAIDLFGIADKISYISTGGGAFLEFVEGKKLPAVVMLEERAKQ.

Residues 21 to 23, Arg-36, 59 to 62, Arg-113, and Arg-146 each bind substrate; these read DLN and HLGR. ATP is bound by residues Lys-197, Glu-314, and 340–343; that span reads GGDT.

It belongs to the phosphoglycerate kinase family. As to quaternary structure, monomer.

It localises to the cytoplasm. The enzyme catalyses (2R)-3-phosphoglycerate + ATP = (2R)-3-phospho-glyceroyl phosphate + ADP. The protein operates within carbohydrate degradation; glycolysis; pyruvate from D-glyceraldehyde 3-phosphate: step 2/5. This chain is Phosphoglycerate kinase, found in Pectobacterium carotovorum subsp. carotovorum (strain PC1).